A 252-amino-acid polypeptide reads, in one-letter code: ELH type 2 (252 aa).

The first 19 residues, 1–19 (AISLLMCLILSALCASSES), serve as a signal peptide directing secretion. Propeptides lie at residues 20–75 (AVVH…VNNE), 92–130 (PQEVSGLKPVMMSRASASADENSLFDLYNTDGAMYQREL), and 144–185 (AAGD…SGIA). The span at 145 to 161 (AGDEDKAEEHNPETESH) shows a compositional bias: basic and acidic residues. Residues 145 to 171 (AGDEDKAEEHNPETESHSRRKRSALTP) are disordered. Lys-222 is modified (lysine amide).

Belongs to the molluscan ELH family. In terms of tissue distribution, bag cell neurons.

It is found in the secreted. Its function is as follows. ELH acts as a neurotransmitter locally, upon neurons of the abdominal ganglion and as a hormone by diffusing into the circulating hemolymph and modulating the activity of other organs. It specifically causes contraction of smooth muscle in the ovotestis and expulsion of the egg string. Functionally, alpha-BCP decreases the activity of a cluster of neurons in the left upper quadrant of the abdominal ganglion. Beta-BCP specifically excites 2 neurons, L1 and R1, in the abdominal ganglion. This chain is ELH type 2 (ELH2), found in Aplysia parvula (Dwarf sea hare).